Here is a 365-residue protein sequence, read N- to C-terminus: tRNA 2-selenouridine synthase (365 aa).

In terms of domain architecture, Rhodanese spans 15-138 (LVNDHPIMDA…MRQFLIETID (124 aa)). C98 functions as the S-selanylcysteine intermediate in the catalytic mechanism.

Belongs to the SelU family. As to quaternary structure, monomer.

The enzyme catalyses 5-methylaminomethyl-2-thiouridine(34) in tRNA + selenophosphate + (2E)-geranyl diphosphate + H2O + H(+) = 5-methylaminomethyl-2-selenouridine(34) in tRNA + (2E)-thiogeraniol + phosphate + diphosphate. It catalyses the reaction 5-methylaminomethyl-2-thiouridine(34) in tRNA + (2E)-geranyl diphosphate = 5-methylaminomethyl-S-(2E)-geranyl-thiouridine(34) in tRNA + diphosphate. The catalysed reaction is 5-methylaminomethyl-S-(2E)-geranyl-thiouridine(34) in tRNA + selenophosphate + H(+) = 5-methylaminomethyl-2-(Se-phospho)selenouridine(34) in tRNA + (2E)-thiogeraniol. It carries out the reaction 5-methylaminomethyl-2-(Se-phospho)selenouridine(34) in tRNA + H2O = 5-methylaminomethyl-2-selenouridine(34) in tRNA + phosphate. In terms of biological role, involved in the post-transcriptional modification of the uridine at the wobble position (U34) of tRNA(Lys), tRNA(Glu) and tRNA(Gln). Catalyzes the conversion of 2-thiouridine (S2U-RNA) to 2-selenouridine (Se2U-RNA). Acts in a two-step process involving geranylation of 2-thiouridine (S2U) to S-geranyl-2-thiouridine (geS2U) and subsequent selenation of the latter derivative to 2-selenouridine (Se2U) in the tRNA chain. The polypeptide is tRNA 2-selenouridine synthase (Shewanella pealeana (strain ATCC 700345 / ANG-SQ1)).